The sequence spans 445 residues: Xylose isomerase (445 aa).

Catalysis depends on residues His-107 and Asp-110. Mg(2+) is bound by residues Glu-238, Glu-274, His-277, Asp-302, Asp-313, Asp-315, and Asp-345.

This sequence belongs to the xylose isomerase family. Homotetramer. Mg(2+) serves as cofactor.

Its subcellular location is the cytoplasm. It carries out the reaction alpha-D-xylose = alpha-D-xylulofuranose. This is Xylose isomerase from Bacillus cereus (strain ATCC 10987 / NRS 248).